Reading from the N-terminus, the 453-residue chain is Aldehyde dehydrogenase, dimeric NADP-preferring (453 aa).

Ser2 bears the N-acetylserine mark. The residue at position 178 (Lys178) is an N6-acetyllysine. 188–193 (GNTAVG) contributes to the NAD(+) binding site. The residue at position 194 (Lys194) is an N6-acetyllysine. Catalysis depends on residues Glu210 and Cys244.

The protein belongs to the aldehyde dehydrogenase family. Homodimer.

Its subcellular location is the cytoplasm. The enzyme catalyses an aldehyde + NAD(+) + H2O = a carboxylate + NADH + 2 H(+). The catalysed reaction is octanal + NAD(+) + H2O = octanoate + NADH + 2 H(+). ALDHs play a major role in the detoxification of alcohol-derived acetaldehyde. They are involved in the metabolism of corticosteroids, biogenic amines, neurotransmitters, and lipid peroxidation. Oxidizes medium and long chain aldehydes into non-toxic fatty acids. Preferentially oxidizes aromatic aldehyde substrates. Comprises about 50 percent of corneal epithelial soluble proteins. May play a role in preventing corneal damage caused by ultraviolet light. The sequence is that of Aldehyde dehydrogenase, dimeric NADP-preferring (ALDH3A1) from Canis lupus familiaris (Dog).